The primary structure comprises 840 residues: Cullin-4 (840 aa).

Polar residues predominate over residues 1-11 (MTSGAPPTIST). The segment at 1-82 (MTSGAPPTIS…TGNSSRTTAT (82 aa)) is disordered. Basic and acidic residues predominate over residues 33–48 (TEAKQMRGDTENRSDG). The span at 69-82 (FRSQTGNSSRTTAT) shows a compositional bias: polar residues. The Cullin neddylation domain occupies 772–831 (DRQYKIDAAVVRIMKARKQLNHQTLMTELLQQLRFPVSTADIKKRLESLIEREYISRDPE). Lys-786 participates in a covalent cross-link: Glycyl lysine isopeptide (Lys-Gly) (interchain with G-Cter in NEDD8).

Belongs to the cullin family. In terms of assembly, part of an E3 ubiquitin-protein ligase complex including cul-4 and ddb-1. In terms of processing, neddylated. Deneddylated via its interaction with the COP9 signalosome (CSN) complex.

Its pathway is protein modification; protein ubiquitination. In terms of biological role, component of cullin-based E3 ubiquitin-protein ligase complexes which mediate the ubiquitination and subsequent proteasomal degradation of target proteins. The functional specificity of the E3 ubiquitin-protein ligase complex depends on the variable substrate recognition component. In association with ddb-1 directs ubiquitination of cdt-1 during S phase and is required for restraining DNA rereplication. Probably is involved in ubiquitination of cki-1. This is Cullin-4 (cul-4) from Caenorhabditis elegans.